The primary structure comprises 139 residues: Protein FAM216B (139 aa).

It belongs to the FAM216 family.

This Homo sapiens (Human) protein is Protein FAM216B (FAM216B).